The chain runs to 158 residues: Large ribosomal subunit protein uL11 (158 aa).

The interval 1–28 (MAGTIEALVPGGQATPGPPLGPELGPTP) is disordered.

The protein belongs to the universal ribosomal protein uL11 family. Part of the ribosomal stalk of the 50S ribosomal subunit. Interacts with L10 and the large rRNA to form the base of the stalk. L10 forms an elongated spine to which L12 dimers bind in a sequential fashion forming a multimeric L10(L12)X complex.

In terms of biological role, forms part of the ribosomal stalk which helps the ribosome interact with GTP-bound translation factors. This is Large ribosomal subunit protein uL11 from Halorubrum lacusprofundi (strain ATCC 49239 / DSM 5036 / JCM 8891 / ACAM 34).